The chain runs to 121 residues: Apoptin (121 aa).

Disordered stretches follow at residues 1-28 and 57-121; these read MNAL…LETP and LRSA…RIRL. The span at 58–70 shows a compositional bias: polar residues; sequence RSATADNSESTGF. The span at 88 to 102 shows a compositional bias: basic and acidic residues; that stretch reads RSCDPSEYRVSELKE.

This sequence belongs to the gyrovirus apoptin family.

Its subcellular location is the host nucleus. Its function is as follows. May act as transcriptional regulator. Induces apoptosis in infected cells. Element of infectious replication cycle. The polypeptide is Apoptin (VP3) (Gallus gallus (Chicken)).